The following is a 546-amino-acid chain: Immunoglobulin-like domain-containing receptor 1 (546 aa).

A signal peptide spans methionine 1 to serine 23. One can recognise an Ig-like V-type domain in the interval leucine 24–lysine 162. Residues leucine 24–histidine 167 are Extracellular-facing. A disulfide bond links cysteine 45 and cysteine 145. A helical membrane pass occupies residues tryptophan 168–cysteine 188. The Cytoplasmic segment spans residues tryptophan 189 to isoleucine 546. Residues tryptophan 399–isoleucine 546 are disordered. The segment covering arginine 442 to glutamine 457 has biased composition (basic and acidic residues). Over residues arginine 458–serine 467 the composition is skewed to basic residues. Residues serine 499 and serine 501 each carry the phosphoserine modification. Over residues glycine 527 to histidine 539 the composition is skewed to basic and acidic residues.

This sequence belongs to the immunoglobulin superfamily. LISCH7 family. In terms of assembly, homooligomer. Interacts with MARVELD2 and OCLN; the interaction is required to recruit MARVELD2 to tricellular contacts. Interacts (via C-terminus) with TRA2A, TRA2B and SRSF1. Interacts with PLSCR1. In terms of tissue distribution, mainly expressed in prostate and to a lower extent in testis, pancreas, kidney, heart and liver.

The protein localises to the cell membrane. It is found in the cell junction. The protein resides in the tight junction. It localises to the cytoplasm. Its subcellular location is the cytosol. In terms of biological role, maintains epithelial barrier function by recruiting MARVELD2/tricellulin to tricellular tight junctions (tTJs). Crucial for normal hearing by maintaining the structural and functional integrity of tTJs, which are critical for the survival of auditory neurosensory HCs. Mediates fatty acids and lipoproteins-stimulated CCK/cholecystokinin secretion in the small intestine. In the inner ear, may regulate alternative pre-mRNA splicing via binding to TRA2A, TRA2B and SRSF1. (Microbial infection) Promotes influenza virus infection by inhibiting viral nucleoprotein NP binding to PLSCR1 and thereby PLSCR1-mediated antiviral activity. In Homo sapiens (Human), this protein is Immunoglobulin-like domain-containing receptor 1.